A 1641-amino-acid polypeptide reads, in one-letter code: MATDGASCEPDFSRAPEDAAGAPAEAAKKEFDVDTLSKSELRMLLSVMEGELEARDLVIEALRARRKEVFIQERYGRFNLNDPFLALQRDYEAGASDKEKKPVCTNPLSILEAVMAHCRKMQERMSTQLAAAESRQKKLEMEKLQLQALEQEHKKLAARLEEERGKNKHVVLMLVKECKQLSGKVLEEAQKLEEVMAKLEEEKKKTSALEEELATEKRRSAEMEAQMEKQLSEFDTEREQLRAKLHREEAHTTDLKEEIDKMKKMIEQLKRGNDSKPSLSLPRKTKDRRLVSISVATEGPMTRSVACQTDLVTETAEPLKKLPLTVPVKPAAGSPLVSASAKGNACASAASVRPGIERQVSHGDLIGSSLPTVPPPSTDRIEENGPSTGSTPDLTSSPTALPSTVSPASGHTPTPPPHSLHSPCANAPLHPGLNPRIQAARFRFQGSNANDPDQNGNTTQSPPSRDVSPTSRDTLVAKQLARNTVTQALSRFTSPPAGAPPRPGAPPTGDVGTYPPVGRTSLKTPGGARVDRGNPPPIPPKKPGLSQTPSPPHPQLKVIMDSSRASSTGIKADNKTVASSPSSLPQGNRVINEENLSKSSSPQLPPKPSIDLTVAPAGCAVSALATSQVGAWPAETPGLNQPACSESSLVIPTTTAFRSSINPVSASSRRAGASDSLLVTASGWSPSLTPLLMSGGPAPLAGRPTLLQQAAAQGNVTLLSMLLNEEGLDINYSCEDGHSALYSAAKNGHTDCVRLLLNAEAQVNAADKNGFTPLCAAAAQGHFKCVELLIAYDANINHAADGGQTPLYLACKNGNKECIKLLLEAGTDRSVKTRDGWTPIHAAVDTGNVDSLKLLMYHGAPAHGNKLQEEPGLAIFDLDQEEHHEGTSKPVVPADLINHADSEGWTAAHIAASKGFKNCLEVLCRHGGLEPERRDKCNRTAHDVATDDCKHLLENLNALKIPLRISVGEIEPGNYGADDFECENTICALNIRKQTSWDDFSKAVSQALTNHFQAISSDGWWSLEDMTFNSTTDSSIGLSASSVRSITLGSVPWSAGQSFTQSPWDFMRTNKAEQVTVLLSGPQEGCLSSVTYASMIPLQMLQNYLRLVEQYHNVIFHGPEGSLQDYIAHQLALCLKHRQMAAGFPCEIVRAEVDADFSKEQLVDLFISSACLIPVKQSPANKKIIIILENLEKSSLSELLGDFLGPLENHSTESPCTFQKGNGMSECYYFHENCFLMGTIAKACLQGSDLLVQQHFRWVQLRWDSEPMQGLLQRFLRRKVVNKFRGQVPSPCDPVCKTVDWALAVWRQLNSCLARLGTPEALLGPKYFLSCPVIPGHAQATVKWMSKLWNAVIAPRVQEAILSRASVKRQPGLGQTTKNPSQGQQAVVRAALSILLNKAVLHGCPLQRAELDQHTADFKGGSFPLSIVSSYSSCSKKRESGAWRKVSTSPRKKSGRFSSPTWNKPDLSEEGIKSNTILQLNCNRNASLSNQKSLENDLSLTLNLDQRLSLGSDDEADLVKELQSMCSSKSESDISKIADSRDDLRRFDSSGNNPVFSATVNNPRMPVSQKEVSPLSSHQMTERSNSKSKTESGVSRVKSFLPVPRSKVTQCSQNTKRSSSSSNTRQIEINNNSRDLEPTQK.

Residues 1-27 form a disordered region; that stretch reads MATDGASCEPDFSRAPEDAAGAPAEAA. Residues 119–276 are a coiled coil; sequence RKMQERMSTQ…EQLKRGNDSK (158 aa). 3 disordered regions span residues 361 to 433, 446 to 472, and 488 to 588; these read SHGD…HPGL, GSNANDPDQNGNTTQSPPSRDVSPTSR, and ALSR…PQGN. Residues 385-405 are compositionally biased toward polar residues; it reads GPSTGSTPDLTSSPTALPSTV. Position 491 is an asymmetric dimethylarginine (R491). Residues 497–506 are compositionally biased toward pro residues; it reads AGAPPRPGAP. Residues 576-586 are compositionally biased toward polar residues; the sequence is TVASSPSSLPQ. ANK repeat units lie at residues 702 to 732, 736 to 765, 769 to 798, 802 to 831, 835 to 864, and 903 to 933; these read GRPTLLQQAAAQGNVTLLSMLLNEEGLDINY, DGHSALYSAAKNGHTDCVRLLLNAEAQVNA, NGFTPLCAAAAQGHFKCVELLIAYDANINH, GGQTPLYLACKNGNKECIKLLLEAGTDRSV, DGWTPIHAAVDTGNVDSLKLLMYHGAPAHG, and EGWTAAHIAASKGFKNCLEVLCRHGGLEPER. The segment at 1442 to 1468 is disordered; sequence AWRKVSTSPRKKSGRFSSPTWNKPDLS. S1512 carries the phosphoserine modification. Residues 1544 to 1641 form a disordered region; the sequence is LRRFDSSGNN…NSRDLEPTQK (98 aa). Polar residues-rich tracts occupy residues 1551 to 1562 and 1570 to 1579; these read GNNPVFSATVNN and KEVSPLSSHQ. A compositionally biased stretch (basic and acidic residues) spans 1580 to 1590; the sequence is MTERSNSKSKT. Low complexity predominate over residues 1612 to 1626; sequence SQNTKRSSSSSNTRQ.

As to quaternary structure, interacts with CTTN/cortactin SH3 domain. Interacts with STRN, STRN4/zinedin and MOB4/phocein; this interactions mediate the association with the STRIPAK core complex and may regulate dendritic spine distribution of the STRIPAK complex in hippocampal neurons. Activation of glutamate receptors weakens the interaction with STRN and STRN4.

The protein localises to the cytoplasm. Its subcellular location is the cell cortex. It is found in the cell projection. The protein resides in the dendritic spine. In terms of biological role, regulates the dendritic spine distribution of CTTN/cortactin in hippocampal neurons, and thus controls dendritic spinogenesis and dendritic spine maintenance. Associates with the striatin-interacting phosphatase and kinase (STRIPAK) core complex to regulate dendritic spine distribution of the STRIPAK complex in hippocampal neurons. This Ovis aries (Sheep) protein is Cortactin-binding protein 2 (CTTNBP2).